The primary structure comprises 323 residues: MSHILTTDTLSPEQVAAVLALAEAVRDADGVAALSEQTLLRVRHGARGRGRFHLAYVDAEQGRVLAGCAFAEVSPGEPDSAEVAVAPQWRRHGLGRRLLDELWAHADARGLRVWAHGDLAPARALAASAGLQRMRALWKMRLPLRGTDSAPAATLPEPALRPEVAQQVEIRTFRVGVDEQEWLRTNARAFADHPEQGALTLEDLQQREQEPWFDPEGFFVAVDRGSGRIAGFHWTKVHDDGAGLTDGEPVGEVYVVGVDPDWQGSGLGRVLTLRGLHHLRDRGLPWVLLYVDEENRPAVQLYRSLGFELWESDVMYGRVPEER.

N-acetyltransferase domains follow at residues 5 to 145 (LTTD…LPLR) and 168 to 323 (VEIR…PEER). Glu-36 contributes to the 1D-myo-inositol 2-(L-cysteinylamino)-2-deoxy-alpha-D-glucopyranoside binding site. 83–85 (VAV) is a binding site for acetyl-CoA. 1D-myo-inositol 2-(L-cysteinylamino)-2-deoxy-alpha-D-glucopyranoside-binding residues include Glu-195, Lys-236, and Glu-252. Acetyl-CoA-binding positions include 256-258 (VGV) and 263-269 (QGSGLGR). Position 290 (Tyr-290) interacts with 1D-myo-inositol 2-(L-cysteinylamino)-2-deoxy-alpha-D-glucopyranoside. Residue 295 to 300 (NRPAVQ) participates in acetyl-CoA binding.

Belongs to the acetyltransferase family. MshD subfamily. As to quaternary structure, monomer.

It catalyses the reaction 1D-myo-inositol 2-(L-cysteinylamino)-2-deoxy-alpha-D-glucopyranoside + acetyl-CoA = mycothiol + CoA + H(+). Its function is as follows. Catalyzes the transfer of acetyl from acetyl-CoA to desacetylmycothiol (Cys-GlcN-Ins) to form mycothiol. This is Mycothiol acetyltransferase from Thermobifida fusca (strain YX).